Here is a 35-residue protein sequence, read N- to C-terminus: uncharacterized protein (35 aa).

Positions 1–27 (MDQNEANIYNENNENNENNENENCQNE) are enriched in low complexity. Residues 1–35 (MDQNEANIYNENNENNENNENENCQNEPIRIKIII) form a disordered region.

This is an uncharacterized protein from Dictyostelium discoideum (Social amoeba).